The sequence spans 108 residues: Nucleoid-associated protein BAV0915 (108 aa).

Belongs to the YbaB/EbfC family. Homodimer.

It is found in the cytoplasm. The protein resides in the nucleoid. Binds to DNA and alters its conformation. May be involved in regulation of gene expression, nucleoid organization and DNA protection. This is Nucleoid-associated protein BAV0915 from Bordetella avium (strain 197N).